The chain runs to 431 residues: Serine--tRNA ligase (431 aa).

Residues 41 to 66 (QSRTQELQAERNARSKSIGEAARRGE) are disordered. 240–242 (TSE) lines the L-serine pocket. Residue 271–273 (RSE) participates in ATP binding. An L-serine-binding site is contributed by Glu294. 358–361 (EISS) is an ATP binding site. Ser392 contributes to the L-serine binding site.

The protein belongs to the class-II aminoacyl-tRNA synthetase family. Type-1 seryl-tRNA synthetase subfamily. In terms of assembly, homodimer. The tRNA molecule binds across the dimer.

It is found in the cytoplasm. It carries out the reaction tRNA(Ser) + L-serine + ATP = L-seryl-tRNA(Ser) + AMP + diphosphate + H(+). The catalysed reaction is tRNA(Sec) + L-serine + ATP = L-seryl-tRNA(Sec) + AMP + diphosphate + H(+). Its pathway is aminoacyl-tRNA biosynthesis; selenocysteinyl-tRNA(Sec) biosynthesis; L-seryl-tRNA(Sec) from L-serine and tRNA(Sec): step 1/1. Catalyzes the attachment of serine to tRNA(Ser). Is also able to aminoacylate tRNA(Sec) with serine, to form the misacylated tRNA L-seryl-tRNA(Sec), which will be further converted into selenocysteinyl-tRNA(Sec). This chain is Serine--tRNA ligase, found in Aeromonas hydrophila subsp. hydrophila (strain ATCC 7966 / DSM 30187 / BCRC 13018 / CCUG 14551 / JCM 1027 / KCTC 2358 / NCIMB 9240 / NCTC 8049).